The primary structure comprises 252 residues: Chitooligosaccharide deacetylase (252 aa).

Mg(2+)-binding residues include His-61 and His-125.

Belongs to the YdjC deacetylase family. ChbG subfamily. In terms of assembly, homodimer. The cofactor is Mg(2+).

The protein resides in the cytoplasm. It catalyses the reaction N,N'-diacetylchitobiose + H2O = N-acetyl-beta-D-glucosaminyl-(1-&gt;4)-D-glucosamine + acetate. The catalysed reaction is diacetylchitobiose-6'-phosphate + H2O = N'-monoacetylchitobiose-6'-phosphate + acetate. It functions in the pathway glycan degradation; chitin degradation. Involved in the degradation of chitin. ChbG is essential for growth on the acetylated chitooligosaccharides chitobiose and chitotriose but is dispensable for growth on cellobiose and chitosan dimer, the deacetylated form of chitobiose. Deacetylation of chitobiose-6-P and chitotriose-6-P is necessary for both the activation of the chb promoter by the regulatory protein ChbR and the hydrolysis of phosphorylated beta-glucosides by the phospho-beta-glucosidase ChbF. Catalyzes the removal of only one acetyl group from chitobiose-6-P to yield monoacetylchitobiose-6-P, the inducer of ChbR and the substrate of ChbF. The protein is Chitooligosaccharide deacetylase of Escherichia fergusonii (strain ATCC 35469 / DSM 13698 / CCUG 18766 / IAM 14443 / JCM 21226 / LMG 7866 / NBRC 102419 / NCTC 12128 / CDC 0568-73).